Reading from the N-terminus, the 130-residue chain is Small ribosomal subunit protein uS11c (130 aa).

The protein belongs to the universal ribosomal protein uS11 family. In terms of assembly, part of the 30S ribosomal subunit.

Its subcellular location is the plastid. The protein localises to the chloroplast. The polypeptide is Small ribosomal subunit protein uS11c (Bigelowiella natans (Pedinomonas minutissima)).